A 410-amino-acid chain; its full sequence is Zinc finger protein 322 (410 aa).

8 C2H2-type zinc fingers span residues 81 to 103 (YRCD…QRIH), 109 to 131 (YKCS…QRTH), 137 to 159 (YTCD…QRSH), 165 to 187 (YLCN…RRTH), 193 to 215 (FKCL…QRTH), 221 to 243 (YKCN…KRVH), 249 to 271 (YKCG…QRVH), and 277 to 299 (YKCL…QATH). The C2H2-type 9; degenerate zinc finger occupies 303-325 (FKCLEYEKSFNCSSDFIVHQRIH). The segment at 361 to 383 (YKYSVCDKTFHHSSALLQHQTVH) adopts a C2H2-type 10; degenerate zinc-finger fold. At serine 400 the chain carries Phosphoserine.

It belongs to the krueppel C2H2-type zinc-finger protein family. In terms of assembly, interacts with POU5F1.

The protein localises to the nucleus. Its subcellular location is the cytoplasm. Its function is as follows. Transcriptional activator. Important for maintenance of pluripotency in embryonic stem cells. Binds directly to the POU5F1 distal enhancer and the NANOG proximal promoter, and enhances expression of both genes. Can also bind to numerous other gene promoters and regulates expression of many other pluripotency factors, either directly or indirectly. Promotes inhibition of MAPK signaling during embryonic stem cell differentiation. This chain is Zinc finger protein 322 (Znf322), found in Mus musculus (Mouse).